A 425-amino-acid polypeptide reads, in one-letter code: UDP-N-acetylglucosamine 1-carboxyvinyltransferase (425 aa).

22-23 (KN) contributes to the phosphoenolpyruvate binding site. Arg-91 contacts UDP-N-acetyl-alpha-D-glucosamine. Cys-115 (proton donor) is an active-site residue. Cys-115 carries the 2-(S-cysteinyl)pyruvic acid O-phosphothioketal modification. UDP-N-acetyl-alpha-D-glucosamine is bound by residues 120–124 (RPIDL), Asp-305, and Val-327.

Belongs to the EPSP synthase family. MurA subfamily.

It is found in the cytoplasm. The enzyme catalyses phosphoenolpyruvate + UDP-N-acetyl-alpha-D-glucosamine = UDP-N-acetyl-3-O-(1-carboxyvinyl)-alpha-D-glucosamine + phosphate. It functions in the pathway cell wall biogenesis; peptidoglycan biosynthesis. Functionally, cell wall formation. Adds enolpyruvyl to UDP-N-acetylglucosamine. This Coprothermobacter proteolyticus (strain ATCC 35245 / DSM 5265 / OCM 4 / BT) protein is UDP-N-acetylglucosamine 1-carboxyvinyltransferase.